We begin with the raw amino-acid sequence, 248 residues long: Probable transcriptional regulatory protein RHECIAT_CH0003714 (248 aa).

The protein belongs to the TACO1 family.

It is found in the cytoplasm. The protein is Probable transcriptional regulatory protein RHECIAT_CH0003714 of Rhizobium etli (strain CIAT 652).